A 549-amino-acid polypeptide reads, in one-letter code: Limonene dehydrogenase subunit B (549 aa).

It belongs to the carotenoid/retinoid oxidoreductase family. Heterodimer composed of CtmA and CtmB. It depends on FAD as a cofactor.

It localises to the cytoplasm. It catalyses the reaction (4S)-limonene + A + H2O = (4S)-perillyl alcohol + AH2. The enzyme catalyses (4R)-limonene + A + H2O = (4R)-perillyl alcohol + AH2. It functions in the pathway terpene metabolism; monoterpene degradation. The presence of molecular oxygen causes a 40% reduction in specific activity. Involved in the degradation of the cyclic monoterpene limonene. Catalyzes the oxidation of limonene at the primary methyl group, forming perillyl alcohol. Hydroxylates the R- and S-enantiomers to their respective enantiomeric form of perillyl alcohol at a similar rate. Native CtmAB oxidizes a wide range of monocyclic monoterpenes containing the allylic methyl group motif (1-methyl-cyclohex-1-ene). Can also catalyze the reverse reaction, the reduction of perillyl alcohol to limonene, but with lower efficiency. Cannot use molecular oxygen as an electron acceptor. The natural electron acceptor is likely a heterodimeric electron transfer flavoprotein (ETF). This is Limonene dehydrogenase subunit B from Castellaniella defragrans (strain DSM 12143 / CCUG 39792 / 65Phen) (Alcaligenes defragrans).